A 114-amino-acid chain; its full sequence is U17-barytoxin-Tl1d (114 aa).

The signal sequence occupies residues 1–20 (MKTIIVFLSLLVLATKFGDA). Residues 21–74 (NEGVNQEQMKEVIQNEFREDFLNEMAAMSLLQQLEAIESTLLEKEADRNSRQKR) constitute a propeptide that is removed on maturation. Cystine bridges form between cysteine 75/cysteine 88, cysteine 82/cysteine 93, and cysteine 87/cysteine 108.

Belongs to the neurotoxin 14 (magi-1) family. 03 (ICK-30-40) subfamily. Expressed by the venom gland.

It is found in the secreted. Ion channel inhibitor. The polypeptide is U17-barytoxin-Tl1d (Trittame loki (Brush-footed trapdoor spider)).